The primary structure comprises 337 residues: Hsp90 co-chaperone Cdc37-like 1 (337 aa).

Residues Met-1–Trp-11 are compositionally biased toward pro residues. The disordered stretch occupies residues Met-1 to Thr-43. The tract at residues Glu-2–Met-171 is self-association. Phosphoserine occurs at positions 32 and 88. The stretch at His-84–Arg-122 forms a coiled coil. A self-association and interaction with Hsp90 region spans residues Lys-147–Pro-277. The interaction with Hsp70 stretch occupies residues Lys-267–Val-337. A required for interaction with STIP1 region spans residues Asn-278–Val-337.

Belongs to the CDC37 family. As to quaternary structure, self-associates. Forms complexes with Hsp70 and Hsp90. Interacts with CDC37, FKBP4, PPID and STIP1.

The protein resides in the cytoplasm. Functionally, co-chaperone that binds to numerous proteins and promotes their interaction with Hsp70 and Hsp90. The polypeptide is Hsp90 co-chaperone Cdc37-like 1 (CDC37L1) (Bos taurus (Bovine)).